Reading from the N-terminus, the 264-residue chain is Tryptophan synthase alpha chain (264 aa).

Residues Glu49 and Asp60 each act as proton acceptor in the active site.

Belongs to the TrpA family. Tetramer of two alpha and two beta chains.

It carries out the reaction (1S,2R)-1-C-(indol-3-yl)glycerol 3-phosphate + L-serine = D-glyceraldehyde 3-phosphate + L-tryptophan + H2O. Its pathway is amino-acid biosynthesis; L-tryptophan biosynthesis; L-tryptophan from chorismate: step 5/5. Functionally, the alpha subunit is responsible for the aldol cleavage of indoleglycerol phosphate to indole and glyceraldehyde 3-phosphate. This Laribacter hongkongensis (strain HLHK9) protein is Tryptophan synthase alpha chain.